A 229-amino-acid chain; its full sequence is Large ribosomal subunit protein uL1 (229 aa).

The protein belongs to the universal ribosomal protein uL1 family. Part of the 50S ribosomal subunit.

Binds directly to 23S rRNA. The L1 stalk is quite mobile in the ribosome, and is involved in E site tRNA release. Its function is as follows. Protein L1 is also a translational repressor protein, it controls the translation of the L11 operon by binding to its mRNA. The protein is Large ribosomal subunit protein uL1 of Haemophilus influenzae (strain 86-028NP).